Consider the following 358-residue polypeptide: MFTRLSAVEERFEEVTNLLCDPDVISDTKRLRELSKEQSSLEETVTTYREYKSVVSQIDDAKAMLEEKLDDEMREMVKLELNELSARKEQLEDRLKILLLPKDPNDEKNVIVEIRGAAGGDEAALFAAVLFRMYTRFAERNAFKIEVLEASPTDIGGYKEIVFSLSGRGAYSKMKFESGAHRVQRIPATESGGRIHTSTATVLVLPEAEDVEVEVHEKDIRIDTFCSSGAGGQSVNTTKSAVRVTHIPTGIMVSCQDEKSQHSNKDKALRVLRARLYDFYMQQQNAEADATRKSLVGTGDRSERIRTYNYPQSRVTDHRIGLTLHRLESVLEGEMDEVIDNLIMHEQTELLKSHAHSA.

At Gln233 the chain carries N5-methylglutamine.

Belongs to the prokaryotic/mitochondrial release factor family. Post-translationally, methylated by PrmC. Methylation increases the termination efficiency of RF1.

It is found in the cytoplasm. In terms of biological role, peptide chain release factor 1 directs the termination of translation in response to the peptide chain termination codons UAG and UAA. The protein is Peptide chain release factor 1 of Brevibacillus brevis (strain 47 / JCM 6285 / NBRC 100599).